Reading from the N-terminus, the 372-residue chain is Probable E3 ubiquitin-protein ligase makorin-1 (372 aa).

2 consecutive C3H1-type zinc fingers follow at residues 20-45 and 48-75; these read KHVTCRYFMHGLCKEGDNCRYSHDLT and KPAAMICKFFQKGNCVFGERCRFDHCKP. Residues 78 to 110 are disordered; that stretch reads NEEFSSPQMLPPSSPSPSTDPESSQPAPRPKTQ. The span at 93–103 shows a compositional bias: low complexity; the sequence is SPSTDPESSQP. Residues 153-180 form a C3H1-type 3 zinc finger; that stretch reads ALRKQLCPYAAVGECRYGINCAYLHGDV. Positions 181–208 are makorin-type Cys-His; sequence CDMCGLQVLHPTDNSQRSQHTKACIEAH. The segment at 226–280 adopts an RING-type zinc-finger fold; that stretch reads CGVCMEVVFEKANPSERRFGILSNCNHCYCLKCIRKWRSAKQFESKIIKSCPECR. The C3H1-type 4 zinc-finger motif lies at 309-338; sequence GMGRKPCRYFDEGRGICPFGANCFYKHAFP.

The enzyme catalyses S-ubiquitinyl-[E2 ubiquitin-conjugating enzyme]-L-cysteine + [acceptor protein]-L-lysine = [E2 ubiquitin-conjugating enzyme]-L-cysteine + N(6)-ubiquitinyl-[acceptor protein]-L-lysine.. It functions in the pathway protein modification; protein ubiquitination. In terms of biological role, E3 ubiquitin ligase catalyzing the covalent attachment of ubiquitin moieties onto substrate proteins. This Tetraodon nigroviridis (Spotted green pufferfish) protein is Probable E3 ubiquitin-protein ligase makorin-1.